The primary structure comprises 243 residues: Venom nerve growth factor (243 aa).

Residues 1-18 (MSMLCYTLIIAFLIGIWA) form the signal peptide. Residues 19 to 125 (APKSEDNVPL…TLNRNIRTKR (107 aa)) constitute a propeptide that is removed on maturation. The tract at residues 45–66 (HEGLKTSRNTDQRHLAPKKAED) is disordered. The segment covering 46 to 66 (EGLKTSRNTDQRHLAPKKAED) has biased composition (basic and acidic residues). 3 cysteine pairs are disulfide-bonded: cysteine 139–cysteine 204, cysteine 182–cysteine 232, and cysteine 192–cysteine 234. A glycan (N-linked (GlcNAc...) asparagine) is linked at asparagine 148.

It belongs to the NGF-beta family. Homodimer; non-covalently linked. In terms of tissue distribution, expressed by the venom gland.

The protein resides in the secreted. Functionally, nerve growth factor is important for the development and maintenance of the sympathetic and sensory nervous systems. It stimulates division and differentiation of sympathetic and embryonic sensory neurons as well as basal forebrain cholinergic neurons in the brain. Its relevance in the snake venom is not clear. However, it has been shown to inhibit metalloproteinase-dependent proteolysis of platelet glycoprotein Ib alpha, suggesting a metalloproteinase inhibition to prevent metalloprotease autodigestion and/or protection against prey proteases. Binds a lipid between the two protein chains in the homodimer. The lipid-bound form promotes histamine relase from mouse mast cells, contrary to the lipid-free form. The polypeptide is Venom nerve growth factor (Cryptophis nigrescens (Eastern small-eyed snake)).